Reading from the N-terminus, the 107-residue chain is Monogrin 2 (107 aa).

Residues 1-20 form the signal peptide; it reads MEGKVLLCFALLLPFTVAQA. Cystine bridges form between Cys28/Cys82, Cys36/Cys62, and Cys55/Cys78. The region spanning 29-82 is the BPTI/Kunitz inhibitor domain; sequence GYLMMQRCRGDTTETKAWGFNYEEKKCQKETVICGTGGAPRNAFETKKDCDALC. Positions 37–39 match the Cell attachment site motif; sequence RGD.

In terms of processing, the N-terminus is blocked. As to expression, expressed in salivary glands.

It is found in the cytoplasmic vesicle. The protein localises to the secretory vesicle. The protein resides in the secreted. Tick salivary platelet aggregation inhibitor that plays an important part in the anti-hemostatic strategy of ticks. Inhibits platelet aggregation induced by ADP (IC(50)~150 nM), collagen, and platelet activating factor (PAF). Acts by binding to platelet membrane glycoprotein IIb-IIIa (ITGA2B/ITGB3) in a metal ion dependent manner. Does not inhibit aggregation induced by ristocecin, an agonist that aggregates platelets independently from the glycoprotein IIb-IIIa (ITGA2B/ITGB3). In contrast to other tick platelet aggregation inhibitors, this protein does not protect ITGA2B/ITGB3 from dissociation under SDS condition, suggesting it may dissocate much faster than its orthologs. This is Monogrin 2 from Argas monolakensis (Mono lake bird tick).